A 441-amino-acid polypeptide reads, in one-letter code: EP1-like glycoprotein 3 (441 aa).

The signal sequence occupies residues 1-22 (MKFSITLALCFTLSIFLIGSQA). Residues 29–159 (QFRVVNEGGY…SGKFVWQSFD (131 aa)) enclose the Bulb-type lectin domain. 3 N-linked (GlcNAc...) asparagine glycosylation sites follow: Asn102, Asn258, and Asn269. A WD repeat occupies 254-296 (GSKFNVSTFLSRPKHNATLSFIRLESDGNIRVWSYSTLATSTA). Residues 356–433 (CDPKTFHYFK…SSLVAYVKAP (78 aa)) enclose the PAN domain. Intrachain disulfides connect Cys387-Cys409 and Cys391-Cys397.

Post-translationally, phosphorylated on tyrosine.

It localises to the secreted. It is found in the cell wall. May be involved in a cell-to cell programmed cell death (PCD) signaling mechanism. The protein is EP1-like glycoprotein 3 of Arabidopsis thaliana (Mouse-ear cress).